The primary structure comprises 91 residues: Sec-independent protein translocase protein TatA (91 aa).

A helical membrane pass occupies residues 1–21 (MGSMSVWHWVIVAVVVMLLFG). A disordered region spans residues 42 to 91 (GMADDETQPTNTTSVPPVGPNDPVRTLPHQGAPGTAPQQTHVPAGDHKAV).

This sequence belongs to the TatA/E family. In terms of assembly, the Tat system comprises two distinct complexes: a TatABC complex, containing multiple copies of TatA, TatB and TatC subunits, and a separate TatA complex, containing only TatA subunits. Substrates initially bind to the TatABC complex, which probably triggers association of the separate TatA complex to form the active translocon.

Its subcellular location is the cell inner membrane. In terms of biological role, part of the twin-arginine translocation (Tat) system that transports large folded proteins containing a characteristic twin-arginine motif in their signal peptide across membranes. TatA could form the protein-conducting channel of the Tat system. In Methylorubrum populi (strain ATCC BAA-705 / NCIMB 13946 / BJ001) (Methylobacterium populi), this protein is Sec-independent protein translocase protein TatA.